We begin with the raw amino-acid sequence, 102 residues long: Signal recognition particle 19 kDa protein (102 aa).

The protein belongs to the SRP19 family. Part of the signal recognition particle protein translocation system, which is composed of SRP and FtsY. Archaeal SRP consists of a 7S RNA molecule of 300 nucleotides and two protein subunits: SRP54 and SRP19.

It localises to the cytoplasm. Its function is as follows. Involved in targeting and insertion of nascent membrane proteins into the cytoplasmic membrane. Binds directly to 7S RNA and mediates binding of the 54 kDa subunit of the SRP. This is Signal recognition particle 19 kDa protein from Saccharolobus solfataricus (strain ATCC 35092 / DSM 1617 / JCM 11322 / P2) (Sulfolobus solfataricus).